Reading from the N-terminus, the 344-residue chain is Chalcone synthase A (344 aa).

The active site involves cysteine 167.

Belongs to the thiolase-like superfamily. Chalcone/stilbene synthases family.

It catalyses the reaction (E)-4-coumaroyl-CoA + 3 malonyl-CoA + 3 H(+) = 2',4,4',6'-tetrahydroxychalcone + 3 CO2 + 4 CoA. It participates in secondary metabolite biosynthesis; flavonoid biosynthesis. Functionally, the primary product of this enzyme is 4,2',4',6'-tetrahydroxychalcone (also termed naringenin-chalcone or chalcone) which can under specific conditions spontaneously isomerize into naringenin. The polypeptide is Chalcone synthase A (CHSA) (Ipomoea nil (Japanese morning glory)).